The sequence spans 37 residues: Cytochrome b6-f complex subunit 5 (37 aa).

The chain crosses the membrane as a helical span at residues 5-25; the sequence is ILLGIVLGMVVVTLAGLFVAA.

It belongs to the PetG family. The 4 large subunits of the cytochrome b6-f complex are cytochrome b6, subunit IV (17 kDa polypeptide, PetD), cytochrome f and the Rieske protein, while the 4 small subunits are PetG, PetL, PetM and PetN. The complex functions as a dimer.

It is found in the cellular thylakoid membrane. Component of the cytochrome b6-f complex, which mediates electron transfer between photosystem II (PSII) and photosystem I (PSI), cyclic electron flow around PSI, and state transitions. PetG is required for either the stability or assembly of the cytochrome b6-f complex. The polypeptide is Cytochrome b6-f complex subunit 5 (Synechococcus sp. (strain JA-2-3B'a(2-13)) (Cyanobacteria bacterium Yellowstone B-Prime)).